The primary structure comprises 338 residues: Alanine racemase (338 aa).

The active-site Proton acceptor; specific for D-alanine is Lys-33. An N6-(pyridoxal phosphate)lysine modification is found at Lys-33. Arg-126 provides a ligand contact to substrate. Tyr-236 (proton acceptor; specific for L-alanine) is an active-site residue. Met-284 is a substrate binding site.

It belongs to the alanine racemase family. It depends on pyridoxal 5'-phosphate as a cofactor.

The catalysed reaction is L-alanine = D-alanine. It functions in the pathway amino-acid biosynthesis; D-alanine biosynthesis; D-alanine from L-alanine: step 1/1. Catalyzes the interconversion of L-alanine and D-alanine. May also act on other amino acids. This is Alanine racemase (alr) from Aquifex aeolicus (strain VF5).